The sequence spans 433 residues: MAEQVFQNFETLQLHAGYTPDPHTRSTAVPIYATSSYTFNDSAHGARLFGLKELGNIYSRLMNPTVDVFEKRIAALEGGIAAAATSSGQAAQFLTIATLAKAGDNIVASSHLYGGTYNQLNVLFPRFGIKTKFVRSGKLEDYVAAIDDQTRAIYVESMSNPDYVVPDFEGIAKIAHEHGIPLVVDNTLGAGGYYIRPIEHGADIVVHSATKWIGGHGTTIGGVIVDSGRFNWNKHSDRFPEMVEPSPSYHGLKYWEAFGPATFITRIRVEMLRDIGACLSPFSAQQLLLGIETLGLRAERHAQNTEKLAKYFESSPNVSWVLWPGSESHPTYAQAKKYLTRGFGAMLSIGVKGDASAGSKVVDGLKLVSNLANVGDAKSLAIHPWSTTHEQLSEDERLASGVTEDMIRISVGIEHVDDIIADFEQSFQKAYGA.

The residue at position 211 (Lys211) is an N6-(pyridoxal phosphate)lysine.

It belongs to the trans-sulfuration enzymes family. The cofactor is pyridoxal 5'-phosphate.

Its pathway is mycotoxin biosynthesis. In terms of biological role, sulfhydrylase; part of the gene cluster that mediates the biosynthesis of fusaric acid, a mycotoxin with low to moderate toxicity to animals and humans, but with high phytotoxic properties. L-aspartate is suggested as fusaric acid amino acid precursor that is activated and further processed to O-acetyl-L-homoserine by cluster enzymes aspartate kinase FUB3 and homoserine O-acetyltransferase FUB5, as well as enzymes of the primary metabolism. The polyketide synthase (PKS) FUB1 generates the triketide trans-2-hexenal which is presumptively released by the hydrolase FUB4 and linked to the NRPS-bound amino acid precursor by NAD(P)-dependent dehydrogenase FUB6. FUB1, FUB4, and the non-canonical NRPS Fub8 may form an enzyme complex. Further processing of the NRPS-bound intermediate might be carried out by FUB6 and the O-acetylhomoserine FUB7, enabling a spontaneous electrocyclization to close the carbon backbone of fusaric acid. Dihydrofusaric acid is likely to be released via reduction by the thioester reductase (TR) domain of FUB8 whereupon the final oxidation to fusaric acid may (also) be performed by the FMN-dependent dehydrogenase FUB9. This chain is Sulfhydrylase FUB7, found in Gibberella moniliformis (strain M3125 / FGSC 7600) (Maize ear and stalk rot fungus).